Here is a 137-residue protein sequence, read N- to C-terminus: MSAHLQWMVVRNCSSFLIKRNKQTYSTEPNNLKARNSFRYNGLIHRKTVGVEAWPDGKGVVVVMKRRSGQRKPATSYVRTTINKNARATLSSIRHMIRKNKYRPDLRMAAIRRASAILRSQKPVVVKRKRTRPTKSS.

N-acetylserine is present on serine 2. Residues lysine 58 and lysine 65 each participate in a glycyl lysine isopeptide (Lys-Gly) (interchain with G-Cter in SUMO2) cross-link. Serine 115 carries the post-translational modification Phosphoserine.

This sequence belongs to the eukaryotic ribosomal protein eL28 family. Component of the large ribosomal subunit.

It localises to the cytoplasm. Its function is as follows. Component of the large ribosomal subunit. The ribosome is a large ribonucleoprotein complex responsible for the synthesis of proteins in the cell. This is Large ribosomal subunit protein eL28 (Rpl28) from Rattus norvegicus (Rat).